We begin with the raw amino-acid sequence, 444 residues long: Type VII secretion system protein EssB (444 aa).

At 1–229 (MVKNHDPKNE…RKVGHTVFKW (229 aa)) the chain is on the cytoplasmic side. Residues 230–250 (VAIGMTTLSVLLIAFLAFLYF) traverse the membrane as a helical segment. The Extracellular portion of the chain corresponds to 251–444 (SVMKHNERIE…EKRQEAERKK (194 aa)). Residues 366–444 (KNNGDLSNDK…EKRQEAERKK (79 aa)) form a disordered region. Positions 372 to 444 (SNDKRSEETK…EKRQEAERKK (73 aa)) are enriched in basic and acidic residues. Residues 387–443 (LQDILDKEKQVKDEKAKSEEEKAKAKDEKLKQQEENEKKQKEQAQKDKEKRQEAERK) adopt a coiled-coil conformation.

Belongs to the EssB family.

Its subcellular location is the cell membrane. Its function is as follows. Component of the type VII secretion system (Ess). Required for the secretion of EsxA. This chain is Type VII secretion system protein EssB, found in Staphylococcus aureus (strain MRSA252).